The sequence spans 85 residues: Small ribosomal subunit protein uS17 (85 aa).

Belongs to the universal ribosomal protein uS17 family. As to quaternary structure, part of the 30S ribosomal subunit.

One of the primary rRNA binding proteins, it binds specifically to the 5'-end of 16S ribosomal RNA. This chain is Small ribosomal subunit protein uS17, found in Agathobacter rectalis (strain ATCC 33656 / DSM 3377 / JCM 17463 / KCTC 5835 / VPI 0990) (Eubacterium rectale).